We begin with the raw amino-acid sequence, 135 residues long: Large ribosomal subunit protein uL16c (135 aa).

It belongs to the universal ribosomal protein uL16 family. As to quaternary structure, part of the 50S ribosomal subunit.

The protein localises to the plastid. It localises to the chloroplast. The sequence is that of Large ribosomal subunit protein uL16c from Eucalyptus globulus subsp. globulus (Tasmanian blue gum).